Here is a 696-residue protein sequence, read N- to C-terminus: Spermatogenesis-associated protein 21 (696 aa).

Disordered regions lie at residues 1-301 (MDNR…AAGT) and 329-386 (LKAR…SVPT). The span at 67-86 (KGPRYRDTFKEGPSELRTQE) shows a compositional bias: basic and acidic residues. Residues 96–116 (KQSSWVPQEGSQELQAGQDQS) are compositionally biased toward polar residues. Positions 195 to 209 (GDKRPKEADVPHIRP) are enriched in basic and acidic residues. Positions 223 to 235 (DSSQEAMPPTSTV) are enriched in polar residues. Over residues 275 to 287 (EVRDIGERREPDR) the composition is skewed to basic and acidic residues. Composition is skewed to low complexity over residues 288–297 (VQQQPQKPVV) and 339–366 (SPRT…SGPS). Residues 424–451 (EPEEQSLQKLYQNREKSEEQLTLKQEEA) are a coiled coil. Positions 481–516 (VTPAQVEDALMSADVNGDGHVDFKDFLAVMTDTRRF) constitute an EF-hand domain. 5 residues coordinate Ca(2+): Asp-494, Asn-496, Asp-498, His-500, and Asp-505. Positions 646–696 (KPTNHYVQDQCTTPGLAPDIRSPFFQSRSQGNREHNSDSRKWPSSVPSRTH) are disordered. The segment covering 676–686 (GNREHNSDSRK) has biased composition (basic and acidic residues).

In terms of biological role, involved in the differentiation of haploid spermatids. The polypeptide is Spermatogenesis-associated protein 21 (SPATA21) (Macaca fascicularis (Crab-eating macaque)).